A 209-amino-acid polypeptide reads, in one-letter code: High frequency lysogenization protein HflD homolog (209 aa).

The protein belongs to the HflD family.

The protein resides in the cytoplasm. It is found in the cell inner membrane. In Saccharophagus degradans (strain 2-40 / ATCC 43961 / DSM 17024), this protein is High frequency lysogenization protein HflD homolog.